Here is an 883-residue protein sequence, read N- to C-terminus: Integrator complex subunit 6-A (883 aa).

The 225-residue stretch at 3 to 227 (ILLFLLDTSA…QCLESLVQKV (225 aa)) folds into the VWFA domain. The Inhibitory loop motif lies at 626 to 633 (MMIDEADE).

Belongs to the Integrator subunit 6 family. Component of the Integrator complex, composed of core subunits INTS1, INTS2, INTS3, INTS4, INTS5, INTS6, INTS7, INTS8, INTS9/RC74, INTS10, INTS11/CPSF3L, INTS12, INTS13, INTS14 and INTS15. The core complex associates with protein phosphatase 2A subunits PPP2CA and PPP2R1A, to form the Integrator-PP2A (INTAC) complex.

It localises to the nucleus. The protein localises to the chromosome. Component of the integrator complex, a multiprotein complex that terminates RNA polymerase II (Pol II) transcription in the promoter-proximal region of genes. The integrator complex provides a quality checkpoint during transcription elongation by driving premature transcription termination of transcripts that are unfavorably configured for transcriptional elongation: the complex terminates transcription by (1) catalyzing dephosphorylation of the C-terminal domain (CTD) of Pol II subunit POLR2A/RPB1 and SUPT5H/SPT5, (2) degrading the exiting nascent RNA transcript via endonuclease activity and (3) promoting the release of Pol II from bound DNA. The integrator complex is also involved in terminating the synthesis of non-coding Pol II transcripts, such as enhancer RNAs (eRNAs), small nuclear RNAs (snRNAs), telomerase RNAs and long non-coding RNAs (lncRNAs). Within the integrator complex, INTS6 acts as a molecular adapter that promotes assembly of protein phosphatase 2A (PP2A) subunits to the integrator core complex, promoting recruitment of PP2A to transcription pause-release checkpoint. The polypeptide is Integrator complex subunit 6-A (ints6-a) (Xenopus laevis (African clawed frog)).